The sequence spans 570 residues: Small ribosomal subunit protein bS1 (570 aa).

S1 motif domains follow at residues 52-116, 134-199, 220-288, 305-375, 392-462, and 479-548; these read GAIL…LSRE, GSIV…VSRR, GERR…LGLK, GKRV…LGLK, GLRV…LGVK, and GSDI…LSIK.

This sequence belongs to the bacterial ribosomal protein bS1 family.

Functionally, binds mRNA; thus facilitating recognition of the initiation point. It is needed to translate mRNA with a short Shine-Dalgarno (SD) purine-rich sequence. This is Small ribosomal subunit protein bS1 (rpsA) from Chlamydia muridarum (strain MoPn / Nigg).